A 379-amino-acid polypeptide reads, in one-letter code: Glutamate 5-kinase (379 aa).

Residue Lys8 participates in ATP binding. The substrate site is built by Ser49, Asp136, and Asn148. ATP-binding positions include Thr168–Asp169 and Thr211–Lys217. Positions Met276–Met354 constitute a PUA domain.

Belongs to the glutamate 5-kinase family.

The protein localises to the cytoplasm. The enzyme catalyses L-glutamate + ATP = L-glutamyl 5-phosphate + ADP. It functions in the pathway amino-acid biosynthesis; L-proline biosynthesis; L-glutamate 5-semialdehyde from L-glutamate: step 1/2. Functionally, catalyzes the transfer of a phosphate group to glutamate to form L-glutamate 5-phosphate. The sequence is that of Glutamate 5-kinase from Microcystis aeruginosa (strain NIES-843 / IAM M-2473).